We begin with the raw amino-acid sequence, 213 residues long: Regulatory protein RecX (213 aa).

It belongs to the RecX family.

The protein localises to the cytoplasm. Functionally, modulates RecA activity. This is Regulatory protein RecX from Clostridium beijerinckii (strain ATCC 51743 / NCIMB 8052) (Clostridium acetobutylicum).